The following is a 472-amino-acid chain: Transmembrane protein 8B (472 aa).

The segment at 1-37 is disordered; the sequence is MNMPQSLGNQPLPPEPPSLRTPAEGPGATSPPEHCWP. Residues 1–233 are Extracellular-facing; it reads MNMPQSLGNQ…ADALTYGFQL (233 aa). 2 N-linked (GlcNAc...) asparagine glycosylation sites follow: asparagine 92 and asparagine 100. The EGF-like domain occupies 182 to 221; that stretch reads FLSPCVDDCGPYGQCKLLRTHNYLYAACECKAGWRGWGCT. 3 disulfide bridges follow: cysteine 186/cysteine 196, cysteine 190/cysteine 209, and cysteine 211/cysteine 220. Residues 234–254 form a helical membrane-spanning segment; that stretch reads LSTLLLCLSNLMFLPPVVLAI. The Cytoplasmic portion of the chain corresponds to 255 to 257; the sequence is RSR. The helical transmembrane segment at 258-277 threads the bilayer; the sequence is YVLEAAVYTFTMFFSTFYHA. The Extracellular portion of the chain corresponds to 278 to 292; the sequence is CDQPGIVVFCIMDYD. A helical membrane pass occupies residues 293 to 313; that stretch reads VLQFCDFLGSLMSVWVTVIAM. Over 314-315 the chain is Cytoplasmic; it reads AR. A helical transmembrane segment spans residues 316-336; sequence LQPVVKQVLYLLGAMLLSMAL. The Extracellular segment spans residues 337–342; it reads QLDRHG. The helical transmembrane segment at 343–363 threads the bilayer; that stretch reads LWNLLGPSLFALGILATAWTV. Topologically, residues 364 to 379 are cytoplasmic; sequence RSVRRRHCYPPTWRRW. A helical membrane pass occupies residues 380–400; that stretch reads LFCLCPGSLIAGSAILLYAFV. The Extracellular segment spans residues 401–405; it reads ETRDN. Residues 406–426 form a helical membrane-spanning segment; the sequence is YFYIHSIWHMLIAGSVGFLLP. The Cytoplasmic portion of the chain corresponds to 427 to 472; that stretch reads PRAKTDRRVPSGARARGCGYQLCINEQEELGLVGPGGATVSSICAS.

It belongs to the TMEM8 family. In terms of assembly, may interact with EZR. In terms of processing, N-glycosylated.

The protein localises to the cell membrane. The protein resides in the cytoplasm. Its subcellular location is the nucleus. It localises to the mitochondrion. It is found in the endoplasmic reticulum. Functionally, may function as a regulator of the EGFR pathway. Probable tumor suppressor which may function in cell growth, proliferation and adhesion. The chain is Transmembrane protein 8B (TMEM8B) from Bos taurus (Bovine).